The primary structure comprises 961 residues: RNA polymerase II subunit A C-terminal domain phosphatase (961 aa).

The residue at position 1 (Met1) is an N-acetylmethionine. The FCP1 homology domain occupies 178–344 (HRNRKLVLMV…SRESQTRKKV (167 aa)). The segment at 328-589 (DMNAPPGSRE…EEEDTDEDDH (262 aa)) is disordered. Residues 394–406 (DSPRPGKPDERDI) show a composition bias toward basic and acidic residues. Ser395 carries the post-translational modification Phosphoserine. The segment covering 450 to 462 (LDFDLSSDSESSS) has biased composition (acidic residues). The segment covering 463–475 (ESEGTKSSSSASD) has biased composition (low complexity). Over residues 575–588 (SMEEEEEEDTDEDD) the composition is skewed to acidic residues. The region spanning 629–728 (LKSKVLADVA…DKVEEQLFPL (100 aa)) is the BRCT domain. Phosphoserine is present on residues Ser674 and Ser740. Disordered stretches follow at residues 730-752 (DDHTKAQRENSPAAFPDREGVPP) and 780-949 (KLIR…ADEM). At Lys780 the chain carries N6-acetyllysine. Polar residues predominate over residues 793-803 (SSSLPIRQEPS). Ser839 is modified (phosphoserine). The segment covering 850 to 859 (CKEDLESMDK) has biased composition (basic and acidic residues). Composition is skewed to acidic residues over residues 860–873 (EVDDILGEGSDDSD) and 937–947 (NEDEGSSSEAD). 2 positions are modified to phosphoserine: Ser869 and Ser872.

As to quaternary structure, homodimer. Interacts with GTF2F1. Interacts with WDR77, SNRPB and SNRNP70. Phosphorylated. In the presence of TFIIF, the phosphorylated form has an increased CTD phosphatase activity. The phosphorylation is required for the physical interaction with GTF2F1. Ubiquitously expressed.

The protein resides in the nucleus. The protein localises to the cytoplasm. It is found in the cytoskeleton. It localises to the microtubule organizing center. Its subcellular location is the centrosome. The protein resides in the spindle pole. The protein localises to the midbody. The enzyme catalyses O-phospho-L-seryl-[protein] + H2O = L-seryl-[protein] + phosphate. It carries out the reaction O-phospho-L-threonyl-[protein] + H2O = L-threonyl-[protein] + phosphate. Processively dephosphorylates 'Ser-2' and 'Ser-5' of the heptad repeats YSPTSPS in the C-terminal domain of the largest RNA polymerase II subunit. This promotes the activity of RNA polymerase II. Plays a role in the exit from mitosis by dephosphorylating crucial mitotic substrates (USP44, CDC20 and WEE1) that are required for M-phase-promoting factor (MPF)/CDK1 inactivation. The chain is RNA polymerase II subunit A C-terminal domain phosphatase (CTDP1) from Homo sapiens (Human).